The sequence spans 609 residues: Proteasome-associated ATPase (609 aa).

The interval 1 to 27 (MGSSERSEAFGTPRESDMSSGDEAELE) is disordered. Residues 17–96 (DMSSGDEAEL…LREEVDRLGQ (80 aa)) adopt a coiled-coil conformation. Residue 296–301 (GCGKTL) participates in ATP binding. The segment at 608–609 (YL) is docks into pockets in the proteasome alpha-ring.

The protein belongs to the AAA ATPase family. As to quaternary structure, homohexamer. Assembles into a hexameric ring structure that caps the 20S proteasome core. Strongly interacts with the prokaryotic ubiquitin-like protein Pup through a hydrophobic interface; the interacting region of ARC lies in its N-terminal coiled-coil domain. There is one Pup binding site per ARC hexamer ring. Upon ATP-binding, the C-terminus of ARC interacts with the alpha-rings of the proteasome core, possibly by binding to the intersubunit pockets.

It participates in protein degradation; proteasomal Pup-dependent pathway. ATPase which is responsible for recognizing, binding, unfolding and translocation of pupylated proteins into the bacterial 20S proteasome core particle. May be essential for opening the gate of the 20S proteasome via an interaction with its C-terminus, thereby allowing substrate entry and access to the site of proteolysis. Thus, the C-termini of the proteasomal ATPase may function like a 'key in a lock' to induce gate opening and therefore regulate proteolysis. The chain is Proteasome-associated ATPase from Mycobacterium avium (strain 104).